Here is a 485-residue protein sequence, read N- to C-terminus: Bifunctional protein HldE (485 aa).

The tract at residues 1-326 (MDFSSTRVLC…AELDESAISN (326 aa)) is ribokinase. 195-198 (NVKE) serves as a coordination point for ATP. Asp-271 is an active-site residue. The tract at residues 354–485 (FTNGCFDILH…GIVKKISTLT (132 aa)) is cytidylyltransferase.

This sequence in the N-terminal section; belongs to the carbohydrate kinase PfkB family. It in the C-terminal section; belongs to the cytidylyltransferase family. As to quaternary structure, homodimer.

It carries out the reaction D-glycero-beta-D-manno-heptose 7-phosphate + ATP = D-glycero-beta-D-manno-heptose 1,7-bisphosphate + ADP + H(+). It catalyses the reaction D-glycero-beta-D-manno-heptose 1-phosphate + ATP + H(+) = ADP-D-glycero-beta-D-manno-heptose + diphosphate. Its pathway is nucleotide-sugar biosynthesis; ADP-L-glycero-beta-D-manno-heptose biosynthesis; ADP-L-glycero-beta-D-manno-heptose from D-glycero-beta-D-manno-heptose 7-phosphate: step 1/4. The protein operates within nucleotide-sugar biosynthesis; ADP-L-glycero-beta-D-manno-heptose biosynthesis; ADP-L-glycero-beta-D-manno-heptose from D-glycero-beta-D-manno-heptose 7-phosphate: step 3/4. Catalyzes the phosphorylation of D-glycero-D-manno-heptose 7-phosphate at the C-1 position to selectively form D-glycero-beta-D-manno-heptose-1,7-bisphosphate. Its function is as follows. Catalyzes the ADP transfer from ATP to D-glycero-beta-D-manno-heptose 1-phosphate, yielding ADP-D-glycero-beta-D-manno-heptose. The polypeptide is Bifunctional protein HldE (Granulibacter bethesdensis (strain ATCC BAA-1260 / CGDNIH1)).